A 306-amino-acid polypeptide reads, in one-letter code: Aspartate carbamoyltransferase catalytic subunit (306 aa).

Residues R56 and T57 each contribute to the carbamoyl phosphate site. K84 is a binding site for L-aspartate. R106, H136, and Q139 together coordinate carbamoyl phosphate. Residues R169 and R221 each contribute to the L-aspartate site. Positions 262 and 263 each coordinate carbamoyl phosphate.

Belongs to the aspartate/ornithine carbamoyltransferase superfamily. ATCase family. Heterododecamer (2C3:3R2) of six catalytic PyrB chains organized as two trimers (C3), and six regulatory PyrI chains organized as three dimers (R2).

It carries out the reaction carbamoyl phosphate + L-aspartate = N-carbamoyl-L-aspartate + phosphate + H(+). The protein operates within pyrimidine metabolism; UMP biosynthesis via de novo pathway; (S)-dihydroorotate from bicarbonate: step 2/3. Its function is as follows. Catalyzes the condensation of carbamoyl phosphate and aspartate to form carbamoyl aspartate and inorganic phosphate, the committed step in the de novo pyrimidine nucleotide biosynthesis pathway. This Streptococcus gordonii (strain Challis / ATCC 35105 / BCRC 15272 / CH1 / DL1 / V288) protein is Aspartate carbamoyltransferase catalytic subunit.